Reading from the N-terminus, the 94-residue chain is Small ribosomal subunit protein uS19 (94 aa).

Belongs to the universal ribosomal protein uS19 family.

In terms of biological role, protein S19 forms a complex with S13 that binds strongly to the 16S ribosomal RNA. In Carboxydothermus hydrogenoformans (strain ATCC BAA-161 / DSM 6008 / Z-2901), this protein is Small ribosomal subunit protein uS19.